A 693-amino-acid chain; its full sequence is Sodium-dependent dopamine transporter (693 aa).

Topologically, residues 1–56 (MSEGRCSVAHMSSVVAPAKEANAMGPKAVELVLVKEQNGVQLTNSTLLNPPQSPTE) are cytoplasmic. A discontinuously helical transmembrane segment spans residues 57–95 (AQDRETWSKKADFLLSVIGFAVDLANVWRFPYLCYKNGG). Glycine 75, alanine 77, valine 78, aspartate 79, and asparagine 82 together coordinate Na(+). Dopamine is bound at residue aspartate 79. The next 2 helical transmembrane spans lie at 96–127 (GAFLVPYLFFMVVAGVPLFYMELALGQFNREG) and 128–171 (AAGV…LSSF). Dopamine contacts are provided by serine 149 and glycine 153. Residues 172–233 (TTELPWTHCN…SQGIDDLGPP (62 aa)) lie on the Extracellular side of the membrane. Cysteines 180 and 189 form a disulfide. N-linked (GlcNAc...) asparagine glycans are attached at residues asparagine 181, asparagine 196, and asparagine 202. 2 helical membrane passes run 234–253 (RWQLTSCLVLVIVLLYFSLW) and 254–284 (KGVKTSGKVVWITATMPYVVLFALLLRGITL). Residues 285–303 (PGAVDAIRAYLSVDFHRLC) are Extracellular-facing. A discontinuously helical transmembrane segment spans residues 304–332 (EASVWIDAAIQICFSLGVGLGVLIAFSSY). Glutamine 314 is a chloride binding site. Phenylalanine 317 serves as a coordination point for dopamine. Positions 318 and 350 each coordinate Na(+). Residue serine 318 coordinates chloride. Residues 333–373 (NKFTNNCYRDAIITTSVNSLTSFSSGFVVFSFLGYMAQKHS) form a helical membrane-spanning segment. Serine 354 serves as a coordination point for chloride. Over 374–397 (VPIGDVAKDGPGLIFIIYPEALAT) the chain is Extracellular. Helical transmembrane passes span 398–439 (LPLS…QLLH), 440–463 (RHRELFTLLVVLATFLLSLFCVTN), and 464–496 (GGIYVFTLLDHFAAGTSILFGVLMEVIGVAWFY). The Na(+) site is built by leucine 415, aspartate 418, and serine 419. Dopamine is bound by residues serine 419 and alanine 420. The Cytoplasmic portion of the chain corresponds to 497-513 (GVWQFSDDIKQMTGRRP). The helical transmembrane segment at 514 to 539 (SLYWRLCWKFVSPCFLLFVVVVSIAT) threads the bilayer. The Extracellular portion of the chain corresponds to 540–550 (FRPPHYGAYVF). The chain crosses the membrane as a helical span at residues 551-580 (PEWATALGWAIAASSMSVVPIYAAYKLCSL). The interaction with TGFB1I1 stretch occupies residues 558–587 (GWAIAASSMSVVPIYAAYKLCSLPGSSREK). At 581–693 (PGSSREKLAY…VESTGLCSVY (113 aa)) the chain is on the cytoplasmic side.

It belongs to the sodium:neurotransmitter symporter (SNF) (TC 2.A.22) family. SLC6A3 subfamily. Monomer. Homooligomer; disulfide-linked. Interacts with PRKCABP and TGFB1I1. Interacts (via N-terminus) with SYNGR3 (via N-terminus). Interacts with SLC18A2. Interacts with TOR1A (ATP-bound); TOR1A regulates SLC6A3 subcellular location. Interacts with alpha-synuclein/SNCA. Interacts with SEPTIN4. Expressed in the neurons of the substantia nigra of the brain.

It localises to the cell membrane. Its subcellular location is the cell projection. The protein localises to the neuron projection. The protein resides in the axon. It catalyses the reaction dopamine(out) + chloride(out) + Na(+)(out) = dopamine(in) + chloride(in) + Na(+)(in). It carries out the reaction (R)-noradrenaline(out) + chloride(out) + Na(+)(out) = (R)-noradrenaline(in) + chloride(in) + Na(+)(in). The enzyme catalyses dopamine(out) + chloride(out) + 2 Na(+)(out) = dopamine(in) + chloride(in) + 2 Na(+)(in). With respect to regulation, inhibited by GBR 12909 dihydrochloride, amphetamine and cocaine. Inhibited by zinc ions. Mediates sodium- and chloride-dependent transport of dopamine. Also mediates sodium- and chloride-dependent transport of norepinephrine (also known as noradrenaline). Regulator of light-dependent retinal hyaloid vessel regression, downstream of OPN5 signaling. This Bos taurus (Bovine) protein is Sodium-dependent dopamine transporter (SLC6A3).